A 98-amino-acid chain; its full sequence is NADH-ubiquinone oxidoreductase chain 4L (98 aa).

The next 3 membrane-spanning stretches (helical) occupy residues 1 to 21 (MPYI…GTLM), 29 to 49 (SLLC…LLSL), and 61 to 81 (LILL…LVMI).

It belongs to the complex I subunit 4L family. In terms of assembly, core subunit of respiratory chain NADH dehydrogenase (Complex I) which is composed of 45 different subunits.

The protein localises to the mitochondrion inner membrane. The enzyme catalyses a ubiquinone + NADH + 5 H(+)(in) = a ubiquinol + NAD(+) + 4 H(+)(out). Core subunit of the mitochondrial membrane respiratory chain NADH dehydrogenase (Complex I) which catalyzes electron transfer from NADH through the respiratory chain, using ubiquinone as an electron acceptor. Part of the enzyme membrane arm which is embedded in the lipid bilayer and involved in proton translocation. The sequence is that of NADH-ubiquinone oxidoreductase chain 4L (MT-ND4L) from Loxodonta africana (African elephant).